Consider the following 131-residue polypeptide: C-type natriuretic peptide 1 (131 aa).

The N-terminal stretch at 1-22 (MLYPALLCAALLLIAPLGHTEG) is a signal peptide. The propeptide occupies 23-109 (RTLHPSPDAI…KRAVMDRSRR (87 aa)). A disulfide bridge links Cys115 with Cys131.

Belongs to the natriuretic peptide family. Expressed in brain and to a low extent in atrium.

It is found in the secreted. Its function is as follows. Exhibits natriuretic and vasodepressant activity. Has a cGMP-stimulating activity. This Oncorhynchus mykiss (Rainbow trout) protein is C-type natriuretic peptide 1.